The following is a 401-amino-acid chain: Probable acid ceramidase (401 aa).

An N-terminal signal peptide occupies residues 1–22 (MKPVAISLSLLLLVTLLPGSEQ). N-linked (GlcNAc...) asparagine glycans are attached at residues N101, N303, and N371.

This sequence belongs to the acid ceramidase family.

The catalysed reaction is an N-acyl-sphingoid base + H2O = a sphingoid base + a fatty acid. It catalyses the reaction an N-acylsphing-4-enine + H2O = sphing-4-enine + a fatty acid. The enzyme catalyses an N-acyl-15-methylhexadecasphing-4-enine + H2O = 15-methylhexadecasphing-4-enine + a fatty acid. Functionally, catalyzes the hydrolysis of ceramides into sphingoid base and free fatty acid. C.elegans contain specific sphingoid bases, which are unique or different in structure compared to the sphingoid bases found in other animals. Two examples of these distinctive compounds are: 15-methylhexadecasphinganine and 15-methylhexadecasphing-4-enine. This is Probable acid ceramidase from Caenorhabditis elegans.